The following is an 84-amino-acid chain: U1-theraphotoxin-Hs1a (84 aa).

The signal sequence occupies residues 1–22 (MKVTLIAILTCAAVLVLHTTAA). A propeptide spanning residues 23-48 (EELEESQLMEVGMPDTELAAVDEERL) is cleaved from the precursor. 3 disulfides stabilise this stretch: cysteine 51-cysteine 65, cysteine 55-cysteine 76, and cysteine 70-cysteine 81.

This sequence belongs to the neurotoxin 12 (Hwtx-2) family. 02 (Hwtx-2) subfamily. In terms of tissue distribution, expressed by the venom gland.

The protein resides in the secreted. Blocks neuromuscular transmission. Acts cooperatively to potentiate the activity of huwentoxin-I. Paralyzes locusts and kills mice following intracerebroventricular injection. The polypeptide is U1-theraphotoxin-Hs1a (Cyriopagopus schmidti (Chinese bird spider)).